Here is a 561-residue protein sequence, read N- to C-terminus: Putative ABC transporter ATP-binding protein SAV_5847 (561 aa).

The ABC transporter 1 domain occupies 2-243; the sequence is IRFEDVSVTY…SPVYPPVVDL (242 aa). 36-43 lines the ATP pocket; that stretch reads GPSGVGKS. Residues 268 to 299 form a disordered region; it reads ERLAATETPTPTATATATAAPAPSPSRPRRPR. Over residues 272-288 the composition is skewed to low complexity; sequence ATETPTPTATATATAAP. In terms of domain architecture, ABC transporter 2 spans 315–543; it reads AAVEALAVRR…SPSFAPQVTK (229 aa). 347–354 lines the ATP pocket; the sequence is GRNGAGKS.

This sequence belongs to the ABC transporter superfamily.

It localises to the cell membrane. In terms of biological role, probably part of an ABC transporter complex. Responsible for energy coupling to the transport system. This chain is Putative ABC transporter ATP-binding protein SAV_5847, found in Streptomyces avermitilis (strain ATCC 31267 / DSM 46492 / JCM 5070 / NBRC 14893 / NCIMB 12804 / NRRL 8165 / MA-4680).